The chain runs to 361 residues: Chorismate synthase (361 aa).

Positions 40–49 (DLQHDLDRRR) are enriched in basic and acidic residues. A disordered region spans residues 40-60 (DLQHDLDRRRPGTSRHTTQRR). Residues R48 and R54 each coordinate NADP(+). Residues 125–127 (RSS), 237–238 (NA), G277, 292–296 (KPTSS), and R318 each bind FMN.

It belongs to the chorismate synthase family. In terms of assembly, homotetramer. Requires FMNH2 as cofactor.

It carries out the reaction 5-O-(1-carboxyvinyl)-3-phosphoshikimate = chorismate + phosphate. It functions in the pathway metabolic intermediate biosynthesis; chorismate biosynthesis; chorismate from D-erythrose 4-phosphate and phosphoenolpyruvate: step 7/7. Catalyzes the anti-1,4-elimination of the C-3 phosphate and the C-6 proR hydrogen from 5-enolpyruvylshikimate-3-phosphate (EPSP) to yield chorismate, which is the branch point compound that serves as the starting substrate for the three terminal pathways of aromatic amino acid biosynthesis. This reaction introduces a second double bond into the aromatic ring system. The chain is Chorismate synthase from Chromohalobacter salexigens (strain ATCC BAA-138 / DSM 3043 / CIP 106854 / NCIMB 13768 / 1H11).